An 82-amino-acid polypeptide reads, in one-letter code: Photosystem I iron-sulfur center (82 aa).

2 consecutive 4Fe-4S ferredoxin-type domains span residues 2 to 31 and 40 to 69; these read AHTV…MVPW and IAAA…IRVY. [4Fe-4S] cluster-binding residues include cysteine 11, cysteine 14, cysteine 17, cysteine 21, cysteine 49, cysteine 52, cysteine 55, and cysteine 59.

The cyanobacterial PSI reaction center is composed of one copy each of PsaA,B,C,D,E,F,I,J,K,L,M and X, and forms trimeric complexes. It depends on [4Fe-4S] cluster as a cofactor.

It localises to the cellular thylakoid membrane. The enzyme catalyses reduced [plastocyanin] + hnu + oxidized [2Fe-2S]-[ferredoxin] = oxidized [plastocyanin] + reduced [2Fe-2S]-[ferredoxin]. Its function is as follows. Apoprotein for the two 4Fe-4S centers FA and FB of photosystem I (PSI); essential for photochemical activity. FB is the terminal electron acceptor of PSI, donating electrons to ferredoxin. The C-terminus interacts with PsaA/B/D and helps assemble the protein into the PSI complex. Required for binding of PsaD and PsaE to PSI. PSI is a plastocyanin/cytochrome c6-ferredoxin oxidoreductase, converting photonic excitation into a charge separation, which transfers an electron from the donor P700 chlorophyll pair to the spectroscopically characterized acceptors A0, A1, FX, FA and FB in turn. The sequence is that of Photosystem I iron-sulfur center from Synechococcus sp. (strain JA-3-3Ab) (Cyanobacteria bacterium Yellowstone A-Prime).